Consider the following 298-residue polypeptide: tRNA pseudouridine synthase B (298 aa).

The active-site Nucleophile is D44.

It belongs to the pseudouridine synthase TruB family. Type 1 subfamily.

The catalysed reaction is uridine(55) in tRNA = pseudouridine(55) in tRNA. Responsible for synthesis of pseudouridine from uracil-55 in the psi GC loop of transfer RNAs. This is tRNA pseudouridine synthase B from Mycobacteroides abscessus (strain ATCC 19977 / DSM 44196 / CCUG 20993 / CIP 104536 / JCM 13569 / NCTC 13031 / TMC 1543 / L948) (Mycobacterium abscessus).